A 224-amino-acid polypeptide reads, in one-letter code: MRSPCAALSASLLLLLLLLWARSSVGCNKALCASDVSKCLIQELCQCRPGEGNCSCCKECMLCLGTLWDECCDCVGMCNPRNYSDTPPTSKSTVEELHEPIPSLFRALTEGDTQLNWNIVSFPVAEELSHHENLVSFLETVNQPQHQNVSVPSNNIHAPYSSDKEHMCTVVYFDDCMSIHQCKISCESMGASKYRWFHNACCECIGPECIDYGSKTVKCMNCMF.

A signal peptide spans 1 to 26 (MRSPCAALSASLLLLLLLLWARSSVG). Residues asparagine 53, asparagine 82, and asparagine 148 are each glycosylated (N-linked (GlcNAc...) asparagine).

The protein belongs to the twisted gastrulation protein family. As to quaternary structure, interacts with CHRD and BMP4. This interaction enhances CHRD/BMP4 complex formation. Interacts with BMP7.

The protein localises to the secreted. Its function is as follows. May be involved in dorsoventral axis formation. Seems to antagonize BMP signaling by forming ternary complexes with CHRD and BMPs, thereby preventing BMPs from binding to their receptors. In addition to the anti-BMP function, also has pro-BMP activity, partly mediated by cleavage and degradation of CHRD, which releases BMPs from ternary complexes. May be an important modulator of BMP-regulated cartilage development and chondrocyte differentiation. May play a role in thymocyte development. The sequence is that of Twisted gastrulation protein homolog 1 (TWSG1) from Gallus gallus (Chicken).